The primary structure comprises 406 residues: Flavohemoprotein (406 aa).

Residues 6-144 (VLLDKKTTEI…IADIFISVEK (139 aa)) enclose the Globin domain. Position 91 (His-91) interacts with heme b. Catalysis depends on charge relay system residues Tyr-101 and Glu-143. The tract at residues 155-406 (GGWTGFRDFK…LFGPLEPIAK (252 aa)) is reductase. Residues 158–267 (TGFRDFKVIK…SAPAGDFILD (110 aa)) form the FAD-binding FR-type domain. Residues Tyr-196 and 212-215 (RQYS) contribute to the FAD site. 280 to 285 (GVGLTP) lines the NADP(+) pocket. An FAD-binding site is contributed by 397 to 400 (LFGP).

The protein belongs to the globin family. Two-domain flavohemoproteins subfamily. In the C-terminal section; belongs to the flavoprotein pyridine nucleotide cytochrome reductase family. Heme b is required as a cofactor. Requires FAD as cofactor.

It catalyses the reaction 2 nitric oxide + NADPH + 2 O2 = 2 nitrate + NADP(+) + H(+). It carries out the reaction 2 nitric oxide + NADH + 2 O2 = 2 nitrate + NAD(+) + H(+). Functionally, is involved in NO detoxification in an aerobic process, termed nitric oxide dioxygenase (NOD) reaction that utilizes O(2) and NAD(P)H to convert NO to nitrate, which protects the bacterium from various noxious nitrogen compounds. Therefore, plays a central role in the inducible response to nitrosative stress. In Oceanobacillus iheyensis (strain DSM 14371 / CIP 107618 / JCM 11309 / KCTC 3954 / HTE831), this protein is Flavohemoprotein.